A 63-amino-acid polypeptide reads, in one-letter code: Small ribosomal subunit protein eS30B (63 aa).

A disordered region spans residues 1–35 (MAKVHGSLARAGKVKSQTPKVEKTEKPKKPKGRAY). S16 carries the post-translational modification Phosphoserine. Position 48 is a phosphothreonine (T48).

This sequence belongs to the eukaryotic ribosomal protein eS30 family. In terms of assembly, component of the small ribosomal subunit (SSU). Mature yeast ribosomes consist of a small (40S) and a large (60S) subunit. The 40S small subunit contains 1 molecule of ribosomal RNA (18S rRNA) and 33 different proteins (encoded by 57 genes). The large 60S subunit contains 3 rRNA molecules (25S, 5.8S and 5S rRNA) and 46 different proteins (encoded by 81 genes).

It localises to the cytoplasm. Component of the ribosome, a large ribonucleoprotein complex responsible for the synthesis of proteins in the cell. The small ribosomal subunit (SSU) binds messenger RNAs (mRNAs) and translates the encoded message by selecting cognate aminoacyl-transfer RNA (tRNA) molecules. The large subunit (LSU) contains the ribosomal catalytic site termed the peptidyl transferase center (PTC), which catalyzes the formation of peptide bonds, thereby polymerizing the amino acids delivered by tRNAs into a polypeptide chain. The nascent polypeptides leave the ribosome through a tunnel in the LSU and interact with protein factors that function in enzymatic processing, targeting, and the membrane insertion of nascent chains at the exit of the ribosomal tunnel. The polypeptide is Small ribosomal subunit protein eS30B (Saccharomyces cerevisiae (strain ATCC 204508 / S288c) (Baker's yeast)).